A 991-amino-acid chain; its full sequence is MSGLYRILVQLEQSPYVKTVPLNMRRDFFFLVVTWMPKTVKMNGSSFVPSLQLLLMLVGFSLPPVAETYGFNKCTQYEFDIHHVLCIRKKITNLTEAISDIPRYTTHLNLTHNEIQVLPPWSFTNLSALVDLRLEWNSIWKIDEGAFRGLENLTLLNLVENKIQSVNNSFEGLSSLKTLLLSHNQITHIHKDAFTPLIKLKYLSLSRNNISDFSGILEAVQHLPCLERLDLTNNSIMYLDHSPRSLVSLTHLSFEGNKLRELNFSALSLPNLTNLSASRNGNKVIQNVYLKTLPQLKSLNLSGTVIKLENLSAKHLQNLRAMDLSNWELRHGHLDMKTVCHLLGNLPKLETLVFQKNVTNAEGIKQLAKCTRLLFLDLGQNSDLIYLNDSEFNALPSLQKLNLNKCQLSFINNRTWSSLQNLTSLDLSHNKFKSFPDFAFSPLKHLEFLSLSRNPITELNNLAFSGLFALKELNLAACWIVTIDRYSFTQFPNLEVLDLGDNNIRTLNHGTFRPLKKLQSLILSHNCLKILEPNSFSGLTNLRSLDLMYNSLSYFHEHLFSGLEKLLILKLGFNKITYETTRTLQYPPFIKLKSLKQLNLEGQRHGIQVVPSNFFQGLGSLQELLLGKNPSVFLDHHQFDPLINLTKLDISGTKDGDRSLYLNASLFQNLKRLKILRLENNNLESLVPDMFSSLQSLQVFSLRFNNLKVINQSHLKNLKSLMFFDVYGNKLQCTCDNLWFKNWSMNTEEVHIPFLRSYPCQQPGSQSLLIDFDDAMCNFDLGKVYFLCSFSMVLSTMVFSWFSTKMIASLWYGLYICRAWYLTKWHKTEKKFLYDAFVSFSATDEAWVYKELVPALEQGSQTTFKLCLHQRDFEPGIDIFENIQNAINTSRKTLCVVSNHYLHSEWCRLEVQLASMKMFYEHKDVIILIFLEEIPNYKLSSYHRLRKLINKQTFITWPDSVHQQPLFWARIRNALGKETVEKENTHLIVVE.

The signal sequence occupies residues 1–68 (MSGLYRILVQ…GFSLPPVAET (68 aa)). At 69 to 783 (YGFNKCTQYE…DAMCNFDLGK (715 aa)) the chain is on the extracellular side. Asparagine 93, asparagine 109, and asparagine 125 each carry an N-linked (GlcNAc...) asparagine glycan. LRR repeat units follow at residues 104-125 (YTTH…SFTN), 128-149 (ALVD…AFRG), 152-174 (NLTL…EGLS), 175-196 (SLKT…AFTP), 199-220 (KLKY…LEAV), 225-246 (CLER…PRSL), 248-268 (SLTH…SALS), 271-292 (NLTN…YLKT), 295-315 (QLKS…SAKH), 318-338 (NLRA…DMKT), 348-368 (KLET…KQLA), 372-394 (RLLF…EFNA), 397-418 (SLQK…TWSS), 421-442 (NLTS…AFSP), 445-466 (HLEF…AFSG), 469-490 (ALKE…SFTQ), 493-514 (NLEV…TFRP), 517-538 (KLQS…SFSG), 541-562 (NLRS…LFSG), 565-585 (KLLI…RTLQ), 594-617 (SLKQ…FFQG), 620-641 (SLQE…QFDP), 644-665 (NLTK…LNAS), 672-693 (RLKI…MFSS), and 696-716 (SLQV…SHLK). N-linked (GlcNAc...) asparagine glycans are attached at residues asparagine 152 and asparagine 167. Residues asparagine 209, asparagine 233, asparagine 263, asparagine 271, asparagine 274, asparagine 300, and asparagine 310 are each glycosylated (N-linked (GlcNAc...) asparagine). Asparagine 357, asparagine 388, asparagine 413, and asparagine 421 each carry an N-linked (GlcNAc...) asparagine glycan. Residues asparagine 644 and asparagine 663 are each glycosylated (N-linked (GlcNAc...) asparagine). Asparagine 711 and asparagine 742 each carry an N-linked (GlcNAc...) asparagine glycan. The region spanning 729–779 (NKLQCTCDNLWFKNWSMNTEEVHIPFLRSYPCQQPGSQSLLIDFDDAMCNF) is the LRRCT domain. A helical membrane pass occupies residues 784–804 (VYFLCSFSMVLSTMVFSWFST). At 805-991 (KMIASLWYGL…KENTHLIVVE (187 aa)) the chain is on the cytoplasmic side. One can recognise a TIR domain in the interval 832–975 (FLYDAFVSFS…LFWARIRNAL (144 aa)).

It belongs to the Toll-like receptor family. As to quaternary structure, binds MYD88 via their respective TIR domains. Interacts with UNC93B1.

The protein localises to the endosome membrane. Component of innate and adaptive immunity that recognizes and binds 23S rRNA from bacteria. TLRs (Toll-like receptors) control host immune response against pathogens through recognition of molecular patterns specific to microorganisms. Acts via MYD88 and TRAF6, leading to NF-kappa-B activation, cytokine secretion and the inflammatory response. Specifically binds the 5'-CGGAAAGACC-3' sequence on bacterial 23S rRNA, a sequence also bound by MLS group antibiotics (including erythromycin). May also recognize vesicular stomatitis virus; however, these data require additional evidences. The sequence is that of Toll-like receptor 13 (Tlr13) from Mus musculus (Mouse).